Here is a 150-residue protein sequence, read N- to C-terminus: Urease accessory protein UreE (150 aa).

This sequence belongs to the UreE family.

The protein resides in the cytoplasm. Its function is as follows. Involved in urease metallocenter assembly. Binds nickel. Probably functions as a nickel donor during metallocenter assembly. The protein is Urease accessory protein UreE of Streptococcus vestibularis.